The following is a 146-amino-acid chain: Hemoglobin subunit beta (146 aa).

An N-acetylvaline modification is found at V1. A Globin domain is found at 2 to 146 (HLTDAEKAAI…VATALGHKYH (145 aa)). An N6-acetyllysine modification is found at K59. A heme b-binding site is contributed by H63. K82 bears the N6-acetyllysine mark. H92 provides a ligand contact to heme b. Residue C93 is modified to S-nitrosocysteine. K144 carries the N6-acetyllysine modification.

This sequence belongs to the globin family. Heterotetramer of two alpha chains and two beta chains. In terms of tissue distribution, red blood cells.

In terms of biological role, involved in oxygen transport from the lung to the various peripheral tissues. The protein is Hemoglobin subunit beta (HBB) of Ondatra zibethicus (Muskrat).